Here is a 159-residue protein sequence, read N- to C-terminus: 6,7-dimethyl-8-ribityllumazine synthase (159 aa).

Residues Trp-26, 57–59, and 79–81 each bind 5-amino-6-(D-ribitylamino)uracil; these read ALE and CVI. A (2S)-2-hydroxy-3-oxobutyl phosphate-binding site is contributed by 84 to 85; the sequence is GT. His-87 functions as the Proton donor in the catalytic mechanism. Asn-112 is a 5-amino-6-(D-ribitylamino)uracil binding site. (2S)-2-hydroxy-3-oxobutyl phosphate is bound at residue Arg-126.

Belongs to the DMRL synthase family.

The enzyme catalyses (2S)-2-hydroxy-3-oxobutyl phosphate + 5-amino-6-(D-ribitylamino)uracil = 6,7-dimethyl-8-(1-D-ribityl)lumazine + phosphate + 2 H2O + H(+). It functions in the pathway cofactor biosynthesis; riboflavin biosynthesis; riboflavin from 2-hydroxy-3-oxobutyl phosphate and 5-amino-6-(D-ribitylamino)uracil: step 1/2. In terms of biological role, catalyzes the formation of 6,7-dimethyl-8-ribityllumazine by condensation of 5-amino-6-(D-ribitylamino)uracil with 3,4-dihydroxy-2-butanone 4-phosphate. This is the penultimate step in the biosynthesis of riboflavin. The protein is 6,7-dimethyl-8-ribityllumazine synthase of Corynebacterium efficiens (strain DSM 44549 / YS-314 / AJ 12310 / JCM 11189 / NBRC 100395).